The chain runs to 256 residues: Small ribosomal subunit protein uS3 (256 aa).

In terms of domain architecture, KH type-2 spans I39 to T121. Residues R227 to A256 form a disordered region. The segment covering P246–A256 has biased composition (basic and acidic residues).

The protein belongs to the universal ribosomal protein uS3 family. Part of the 30S ribosomal subunit. Forms a tight complex with proteins S10 and S14.

Its function is as follows. Binds the lower part of the 30S subunit head. Binds mRNA in the 70S ribosome, positioning it for translation. The polypeptide is Small ribosomal subunit protein uS3 (Synechococcus sp. (strain JA-2-3B'a(2-13)) (Cyanobacteria bacterium Yellowstone B-Prime)).